The primary structure comprises 490 residues: Cytochrome P450 71B28 (490 aa).

The chain crosses the membrane as a helical span at residues 1 to 21 (MSVFLCFLCLLPLILIFLKNL). Cysteine 440 is a heme binding site.

It belongs to the cytochrome P450 family. It depends on heme as a cofactor.

Its subcellular location is the membrane. The sequence is that of Cytochrome P450 71B28 (CYP71B28) from Arabidopsis thaliana (Mouse-ear cress).